The chain runs to 278 residues: Tumor necrosis factor ligand superfamily member 6 (278 aa).

At Met1–Glu77 the chain is on the cytoplasmic side. Positions Pro26–Ser68 are disordered. The segment covering Pro33 to Gln42 has biased composition (low complexity). The segment covering Arg43–Ser68 has biased composition (pro residues). The chain crosses the membrane as a helical; Signal-anchor for type II membrane protein span at residues Leu78–Tyr99. Over Gln100–Leu278 the chain is Extracellular. The N-linked (GlcNAc...) asparagine glycan is linked to Asn116. Positions Glu125–Ser135 are enriched in polar residues. Residues Glu125–Thr147 are disordered. One can recognise a THD domain in the interval Ser142–Leu278. Cys199 and Cys230 are oxidised to a cystine. 2 N-linked (GlcNAc...) asparagine glycosylation sites follow: Asn247 and Asn257.

Belongs to the tumor necrosis factor family. In terms of assembly, homotrimer. Interacts with ARHGAP9, BAIAP2L1, BTK, CACNB3, CACNB4, CRK, DLG2, DNMBP, DOCK4, EPS8L3, FGR, FYB1, FYN, HCK, ITK, ITSN2, KALRN, LYN, MACC1, MIA, MPP4, MYO15A, NCF1, NCK1, NCK2, NCKIPSD, OSTF1, PIK3R1, PSTPIP1, RIMBP3C, SAMSN1, SH3GL3, SH3PXD2B, SH3PXD2A, SH3RF2, SKAP2, SNX33, SNX9, SORBS3, SPTA1, SRC, SRGAP1, SRGAP2, SRGAP3, TEC, TJP3 and YES1. The soluble form derives from the membrane form by proteolytic processing. The membrane-bound form undergoes two successive intramembrane proteolytic cleavages. The first one is processed by ADAM10 producing an N-terminal fragment, which lacks the receptor-binding extracellular domain. This ADAM10-processed FasL (FasL APL) remnant form is still membrane anchored and further processed by SPPL2A that liberates the FasL intracellular domain (FasL ICD). FasL shedding by ADAM10 is a prerequisite for subsequent intramembrane cleavage by SPPL2A in T-cells. Post-translationally, phosphorylated by FGR on tyrosine residues; this is required for ubiquitination and subsequent internalization. In terms of processing, N-glycosylated. Monoubiquitinated. Expressed in activated splenocytes and thymocytes. Moderate or weak expression found in small intestines, kidney and lung.

It localises to the cell membrane. Its subcellular location is the cytoplasmic vesicle lumen. The protein localises to the lysosome lumen. It is found in the secreted. The protein resides in the nucleus. Its function is as follows. Cytokine that binds to TNFRSF6/FAS, a receptor that transduces the apoptotic signal into cells. Involved in cytotoxic T-cell-mediated apoptosis, natural killer cell-mediated apoptosis and in T-cell development. Initiates fratricidal/suicidal activation-induced cell death (AICD) in antigen-activated T-cells contributing to the termination of immune responses. TNFRSF6/FAS-mediated apoptosis also has a role in the induction of peripheral tolerance. Binds to TNFRSF6B/DcR3, a decoy receptor that blocks apoptosis. Induces FAS-mediated activation of NF-kappa-B, initiating non-apoptotic signaling pathways. Can induce apoptosis but does not appear to be essential for this process. In terms of biological role, cytoplasmic form induces gene transcription inhibition. In Rattus norvegicus (Rat), this protein is Tumor necrosis factor ligand superfamily member 6 (Faslg).